Reading from the N-terminus, the 599-residue chain is Retrotransposon Gag-like protein 5 (599 aa).

Disordered stretches follow at residues 77–97 (DPTP…CWPP), 116–139 (DYTN…ELHS), and 377–450 (FPQE…EEDE). Residues 78–90 (PTPEEEEEEEEEV) show a composition bias toward acidic residues. Composition is skewed to acidic residues over residues 393 to 432 (DEME…EDKE) and 439 to 450 (DSDENKYEEEDE).

This chain is Retrotransposon Gag-like protein 5, found in Mus musculus (Mouse).